Reading from the N-terminus, the 480-residue chain is Adenosylhomocysteinase (480 aa).

Residues Thr63, Asp142, and Glu203 each contribute to the substrate site. Residue 204–206 (TTT) coordinates NAD(+). Substrate-binding residues include Lys233 and Asp237. NAD(+) contacts are provided by residues Asn238, 267-272 (GYGDVG), Glu290, Asn325, 346-348 (IGH), and Asn394.

The protein belongs to the adenosylhomocysteinase family. Requires NAD(+) as cofactor.

Its subcellular location is the cytoplasm. It catalyses the reaction S-adenosyl-L-homocysteine + H2O = L-homocysteine + adenosine. Its pathway is amino-acid biosynthesis; L-homocysteine biosynthesis; L-homocysteine from S-adenosyl-L-homocysteine: step 1/1. In terms of biological role, may play a key role in the regulation of the intracellular concentration of adenosylhomocysteine. This chain is Adenosylhomocysteinase, found in Xanthomonas axonopodis pv. citri (strain 306).